The primary structure comprises 432 residues: Glutamate-1-semialdehyde 2,1-aminomutase (432 aa).

An N6-(pyridoxal phosphate)lysine modification is found at lysine 266.

Belongs to the class-III pyridoxal-phosphate-dependent aminotransferase family. HemL subfamily. In terms of assembly, homodimer. It depends on pyridoxal 5'-phosphate as a cofactor.

The protein localises to the cytoplasm. The catalysed reaction is (S)-4-amino-5-oxopentanoate = 5-aminolevulinate. It functions in the pathway porphyrin-containing compound metabolism; protoporphyrin-IX biosynthesis; 5-aminolevulinate from L-glutamyl-tRNA(Glu): step 2/2. The chain is Glutamate-1-semialdehyde 2,1-aminomutase from Janthinobacterium sp. (strain Marseille) (Minibacterium massiliensis).